Reading from the N-terminus, the 214-residue chain is 3,4-dihydroxy-2-butanone 4-phosphate synthase (214 aa).

D-ribulose 5-phosphate is bound by residues 37-38 (RE), D42, 150-154 (RRGHT), and E174. E38 serves as a coordination point for Mg(2+). A Mg(2+)-binding site is contributed by H153.

The protein belongs to the DHBP synthase family. Homodimer. It depends on Mg(2+) as a cofactor. Mn(2+) is required as a cofactor.

It carries out the reaction D-ribulose 5-phosphate = (2S)-2-hydroxy-3-oxobutyl phosphate + formate + H(+). Its pathway is cofactor biosynthesis; riboflavin biosynthesis; 2-hydroxy-3-oxobutyl phosphate from D-ribulose 5-phosphate: step 1/1. Its function is as follows. Catalyzes the conversion of D-ribulose 5-phosphate to formate and 3,4-dihydroxy-2-butanone 4-phosphate. The polypeptide is 3,4-dihydroxy-2-butanone 4-phosphate synthase (Nitratidesulfovibrio vulgaris (strain DP4) (Desulfovibrio vulgaris)).